Here is a 458-residue protein sequence, read N- to C-terminus: UDP-N-acetylmuramoylalanine--D-glutamate ligase (458 aa).

124–130 (GSDGKTT) lines the ATP pocket.

This sequence belongs to the MurCDEF family.

It localises to the cytoplasm. The catalysed reaction is UDP-N-acetyl-alpha-D-muramoyl-L-alanine + D-glutamate + ATP = UDP-N-acetyl-alpha-D-muramoyl-L-alanyl-D-glutamate + ADP + phosphate + H(+). It functions in the pathway cell wall biogenesis; peptidoglycan biosynthesis. Cell wall formation. Catalyzes the addition of glutamate to the nucleotide precursor UDP-N-acetylmuramoyl-L-alanine (UMA). The sequence is that of UDP-N-acetylmuramoylalanine--D-glutamate ligase from Clostridium botulinum (strain Loch Maree / Type A3).